We begin with the raw amino-acid sequence, 115 residues long: uncharacterized protein (115 aa).

This is an uncharacterized protein from Ostreid herpesvirus 1 (isolate France) (OsHV-1).